Reading from the N-terminus, the 463-residue chain is NADH dehydrogenase [ubiquinone] iron-sulfur protein 2, mitochondrial (463 aa).

A mitochondrion-targeting transit peptide spans 1–33 (MAALRVLCGLRGVAAQVLRPGAGVRLPIQPSRG). At Lys62 the chain carries N6-acetyllysine. The residue at position 118 (Arg118) is a Symmetric dimethylarginine. [4Fe-4S] cluster contacts are provided by Cys326, Cys332, and Cys347.

The protein belongs to the complex I 49 kDa subunit family. In terms of assembly, core subunit of respiratory chain NADH dehydrogenase (Complex I) which is composed of 45 different subunits. Component of the iron-sulfur (IP) fragment of the enzyme. Interacts with NDUFAF3. Interacts with NDUFAF7. Interacts with CERS2. [4Fe-4S] cluster serves as cofactor. Post-translationally, dimethylation at Arg-118 by NDUFAF7 takes place after NDUFS2 assembles into the complex I, leading to stabilize the early intermediate complex.

The protein resides in the mitochondrion inner membrane. The catalysed reaction is a ubiquinone + NADH + 5 H(+)(in) = a ubiquinol + NAD(+) + 4 H(+)(out). In terms of biological role, core subunit of the mitochondrial membrane respiratory chain NADH dehydrogenase (Complex I) which catalyzes electron transfer from NADH through the respiratory chain, using ubiquinone as an electron acceptor. Essential for the catalytic activity and assembly of complex I. Redox-sensitive, critical component of the oxygen-sensing pathway in the pulmonary vasculature which plays a key role in acute pulmonary oxygen-sensing and hypoxic pulmonary vasoconstriction. Plays an important role in carotid body sensing of hypoxia. Essential for glia-like neural stem and progenitor cell proliferation, differentiation and subsequent oligodendrocyte or neuronal maturation. This is NADH dehydrogenase [ubiquinone] iron-sulfur protein 2, mitochondrial (NDUFS2) from Gorilla gorilla gorilla (Western lowland gorilla).